We begin with the raw amino-acid sequence, 378 residues long: Cysteine synthase (378 aa).

The segment at 10-31 (NSEGDSNQQQNNNNNSNNNLKE) is disordered. A compositionally biased stretch (low complexity) spans 15 to 28 (SNQQQNNNNNSNNN). An N6-(pyridoxal phosphate)lysine modification is found at Lys79. Pyridoxal 5'-phosphate-binding positions include 215–219 (GTGGT) and Ser319.

The protein belongs to the cysteine synthase/cystathionine beta-synthase family. The cofactor is pyridoxal 5'-phosphate.

It catalyses the reaction O-acetyl-L-serine + hydrogen sulfide = L-cysteine + acetate. It functions in the pathway amino-acid biosynthesis; L-cysteine biosynthesis; L-cysteine from L-serine: step 2/2. This chain is Cysteine synthase (cysK), found in Dictyostelium discoideum (Social amoeba).